The sequence spans 464 residues: E3 ubiquitin-protein ligase parkin (464 aa).

Positions 1-76 (MIVFVRFNSS…VHIVQRPRRR (76 aa)) constitute a Ubiquitin-like domain. Serine 65 bears the Phosphoserine; by PINK1 mark. The interval 70 to 96 (VQRPRRRSHETNASGGDEPQSTSEGSI) is disordered. The interval 77-236 (SHETNASGGD…LITSNRRSIP (160 aa)) is necessary for PINK1-dependent localization to mitochondria. At threonine 80 the chain carries Phosphothreonine. Polar residues predominate over residues 80-96 (TNASGGDEPQSTSEGSI). An RING-type 0; atypical zinc finger spans residues 140 to 224 (PTYNSFFIYC…PTSDKDTSVA (85 aa)). Threonine 174 is modified (phosphothreonine; by PINK1). The tract at residues 203–237 (TRAEFFFKCGAHPTSDKDTSVALNLITSNRRSIPC) is SYT11 binding 1. Phosphothreonine is present on threonine 216. Residues 233–464 (RSIPCIACTD…ACMGDHWFDV (232 aa)) form a TRIAD supradomain region. The Zn(2+) site is built by cysteine 237, cysteine 240, cysteine 252, histidine 256, cysteine 259, cysteine 262, cysteine 288, cysteine 292, cysteine 331, and cysteine 336. The RING-type 1 zinc-finger motif lies at 237 to 292 (CIACTDVRSPVLVFQCNHRHVICLDCFHLYCVTRLNDRQFVHDAQLGYSLPCVAGC). The SYT11 binding 2 stretch occupies residues 256–292 (HVICLDCFHLYCVTRLNDRQFVHDAQLGYSLPCVAGC). The IBR-type zinc finger occupies 312-376 (TRYQQYGAEE…CKEAYHEGDC (65 aa)). Residue lysine 348 forms a Glycyl lysine isopeptide (Lys-Gly) (interchain with G-Cter in ISG15) linkage. Positions 351, 359, 364, and 367 each coordinate Zn(2+). Lysine 368 is covalently cross-linked (Glycyl lysine isopeptide (Lys-Gly) (interchain with G-Cter in ISG15)). Positions 372 and 376 each coordinate Zn(2+). Positions 377 to 409 (DSLLEPSGATSQAYRVDKRAAEQARWEEASKET) are REP. Residues cysteine 417 and cysteine 420 each coordinate Zn(2+). The RING-type 2; atypical zinc-finger motif lies at 417 to 448 (CPRCNVPIEKNGGCMHMKCPQPQCKLEWCWNC). Cysteine 430 is a catalytic residue. Positions 435, 440, 445, 448, 456, and 460 each coordinate Zn(2+).

The protein belongs to the RBR family. Parkin subfamily. Forms an E3 ubiquitin ligase complex with UBE2L3 or UBE2L6. Mediates 'Lys-63'-linked polyubiquitination by associating with UBE2V1. Part of a SCF-like complex, consisting of PRKN, CUL1 and FBXW7. Interacts with SNCAIP. Binds to the C2A and C2B domains of SYT11. Interacts and regulates the turnover of SEPTIN5. Part of a complex, including STUB1, HSP70 and GPR37. The amount of STUB1 in the complex increases during ER stress. STUB1 promotes the dissociation of HSP70 from PRKN and GPR37, thus facilitating PRKN-mediated GPR37 ubiquitination. HSP70 transiently associates with unfolded GPR37 and inhibits the E3 activity of PRKN, whereas, STUB1 enhances the E3 activity of PRKN through promotion of dissociation of HSP70 from PRKN-GPR37 complexes. Interacts with PSMD4 and PACRG. Interacts with LRRK2. Interacts with RANBP2. Interacts with SUMO1 but not SUMO2, which promotes nuclear localization and autoubiquitination. Interacts (via first RING-type domain) with AIMP2 (via N-terminus). Interacts with PSMA7 and RNF41. Interacts with PINK1. Forms a complex with PINK1 and PARK7. Interacts with CHPF, the interaction with isoform 2 may facilitate PRKN transport into the mitochondria. Interacts with MFN2 (phosphorylated), promotes PRKN localization in dysfunctional depolarized mitochondria. Interacts with FBXO7; this promotes translocation to dysfunctional depolarized mitochondria. Interacts with ZNF746. Interacts with heat shock protein 70 family members, including HSPA1L, HSPA1A and HSPA8; interaction HSPA1L promotes translocation to damaged mitochondria. Interacts with BAG4 and, to a lesser extent, BAG5; interaction with BAG4 inhibits translocation to damaged mitochondria. Forms a complex with PRKN and PARK7. Interacts with AMBRA1. Auto-ubiquitinates in an E2-dependent manner leading to its own degradation. Also polyubiquitinated by RNF41 for proteasomal degradation. In terms of processing, S-nitrosylated. Post-translationally, phosphorylated. Activation requires phosphorylation at Ser-65 by PINK1 and binding to PINK1 phosphorylated ubiquitin. Phosphorylation at Thr-174 by PINK1 and at Thr-216 is important for mitochondrial localization. As to expression, expressed in all subdivisions of the brain (at protein level). Highly expressed in brainstem, cranial nerve, pontine, cerebellar nuclei, indusium griseum, nuclei reticularis, strata oriens and laccunosum moleculare of the hippocampal CA2 region. Low levels were found in the telencephalon and diencephalon. Expressed in heart, liver, skeletal muscle, kidney and testis.

The protein localises to the cytoplasm. It localises to the cytosol. Its subcellular location is the nucleus. The protein resides in the endoplasmic reticulum. It is found in the mitochondrion. The protein localises to the mitochondrion outer membrane. It localises to the cell projection. Its subcellular location is the neuron projection. The protein resides in the postsynaptic density. It is found in the presynapse. It catalyses the reaction [E2 ubiquitin-conjugating enzyme]-S-ubiquitinyl-L-cysteine + [acceptor protein]-L-lysine = [E2 ubiquitin-conjugating enzyme]-L-cysteine + [acceptor protein]-N(6)-ubiquitinyl-L-lysine.. It participates in protein modification; protein ubiquitination. In the autoinhibited state the side chain of Phe-462 inserts into a hydrophobic groove in RING-0, occluding the ubiquitin acceptor site Cys-430, whereas the REP repressor element binds RING-1 and blocks its E2-binding site. Activation of PRKN requires 2 steps: (1) phosphorylation at Ser-65 by PINK1 and (2) binding to phosphorylated ubiquitin, leading to unlock repression of the catalytic Cys-430 by the RING-0 region via an allosteric mechanism and converting PRKN to its fully-active form. According to another report, phosphorylation at Ser-65 by PINK1 is not essential for activation and only binding to phosphorylated ubiquitin is essential to unlock repression. In addition, ISG15 conjugation positively regulates its ubiquitin E3 ligase activity by suppressing the intramolecular interaction that maintains its autoinhibited conformation. Its function is as follows. Functions within a multiprotein E3 ubiquitin ligase complex, catalyzing the covalent attachment of ubiquitin moieties onto substrate proteins. Substrates include SYT11 and VDAC1. Other substrates are BCL2, CCNE1, GPR37, RHOT1/MIRO1, MFN1, MFN2, STUB1, SNCAIP, SEPTIN5, TOMM20, USP30, ZNF746, MIRO1 and AIMP2. Mediates monoubiquitination as well as 'Lys-6', 'Lys-11', 'Lys-48'-linked and 'Lys-63'-linked polyubiquitination of substrates depending on the context. Participates in the removal and/or detoxification of abnormally folded or damaged protein by mediating 'Lys-63'-linked polyubiquitination of misfolded proteins such as PARK7: 'Lys-63'-linked polyubiquitinated misfolded proteins are then recognized by HDAC6, leading to their recruitment to aggresomes, followed by degradation. Mediates 'Lys-63'-linked polyubiquitination of a 22 kDa O-linked glycosylated isoform of SNCAIP, possibly playing a role in Lewy-body formation. Mediates monoubiquitination of BCL2, thereby acting as a positive regulator of autophagy. Protects against mitochondrial dysfunction during cellular stress, by acting downstream of PINK1 to coordinate mitochondrial quality control mechanisms that remove and replace dysfunctional mitochondrial components. Depending on the severity of mitochondrial damage and/or dysfunction, activity ranges from preventing apoptosis and stimulating mitochondrial biogenesis to regulating mitochondrial dynamics and eliminating severely damaged mitochondria via mitophagy. Activation and recruitment onto the outer membrane of damaged/dysfunctional mitochondria (OMM) requires PINK1-mediated phosphorylation of both PRKN and ubiquitin. After mitochondrial damage, functions with PINK1 to mediate the decision between mitophagy or preventing apoptosis by inducing either the poly- or monoubiquitination of VDAC1, respectively; polyubiquitination of VDAC1 promotes mitophagy, while monoubiquitination of VDAC1 decreases mitochondrial calcium influx which ultimately inhibits apoptosis. When cellular stress results in irreversible mitochondrial damage, promotes the autophagic degradation of dysfunctional depolarized mitochondria (mitophagy) by promoting the ubiquitination of mitochondrial proteins such as TOMM20, RHOT1/MIRO1, MFN1 and USP30. Preferentially assembles 'Lys-6'-, 'Lys-11'- and 'Lys-63'-linked polyubiquitin chains, leading to mitophagy. The PINK1-PRKN pathway also promotes fission of damaged mitochondria by PINK1-mediated phosphorylation which promotes the PRKN-dependent degradation of mitochondrial proteins involved in fission such as MFN2. This prevents the refusion of unhealthy mitochondria with the mitochondrial network or initiates mitochondrial fragmentation facilitating their later engulfment by autophagosomes. Regulates motility of damaged mitochondria via the ubiquitination and subsequent degradation of MIRO1 and MIRO2; in motor neurons, this likely inhibits mitochondrial intracellular anterograde transport along the axons which probably increases the chance of the mitochondria undergoing mitophagy in the soma. Involved in mitochondrial biogenesis via the 'Lys-48'-linked polyubiquitination of transcriptional repressor ZNF746/PARIS which leads to its subsequent proteasomal degradation and allows activation of the transcription factor PPARGC1A. Limits the production of reactive oxygen species (ROS). Regulates cyclin-E during neuronal apoptosis. In collaboration with CHPF isoform 2, may enhance cell viability and protect cells from oxidative stress. Independently of its ubiquitin ligase activity, protects from apoptosis by the transcriptional repression of p53/TP53. May protect neurons against alpha synuclein toxicity, proteasomal dysfunction, GPR37 accumulation, and kainate-induced excitotoxicity. May play a role in controlling neurotransmitter trafficking at the presynaptic terminal and in calcium-dependent exocytosis. May represent a tumor suppressor gene. This is E3 ubiquitin-protein ligase parkin from Mus musculus (Mouse).